The following is a 623-amino-acid chain: Glutathione import ATP-binding protein GsiA (623 aa).

2 consecutive ABC transporter domains span residues 15–269 (VENL…RALL) and 314–564 (LRVR…RKLL). ATP contacts are provided by residues 49 to 56 (GESGSGKS) and 357 to 364 (GESGSGKS).

It belongs to the ABC transporter superfamily. Glutathione importer (TC 3.A.1.5.11) family. In terms of assembly, the complex is composed of two ATP-binding proteins (GsiA), two transmembrane proteins (GsiC and GsiD) and a solute-binding protein (GsiB).

It is found in the cell inner membrane. The enzyme catalyses glutathione(out) + ATP + H2O = glutathione(in) + ADP + phosphate + H(+). In terms of biological role, part of the ABC transporter complex GsiABCD involved in glutathione import. Responsible for energy coupling to the transport system. This is Glutathione import ATP-binding protein GsiA from Shigella boydii serotype 4 (strain Sb227).